A 191-amino-acid chain; its full sequence is Large ribosomal subunit protein uL6 (191 aa).

This sequence belongs to the universal ribosomal protein uL6 family. As to quaternary structure, part of the 50S ribosomal subunit.

This protein binds to the 23S rRNA, and is important in its secondary structure. It is located near the subunit interface in the base of the L7/L12 stalk, and near the tRNA binding site of the peptidyltransferase center. This chain is Large ribosomal subunit protein uL6, found in Gloeobacter violaceus (strain ATCC 29082 / PCC 7421).